The primary structure comprises 152 residues: MQCPFCNHGELKVIDSRNAPEANAIKRRRECLNCGQRFTTFETVELTLQVLKRDGRYENFQESKLINGLNAASSHTRIGQDQVHAIASNVKSELLGKQNREISTKEIGELVMKYLKKADMIAYIRFACVYRRFKDVGELMEVLLSATPDMEK.

The segment at 3 to 34 is a zinc-finger region; it reads CPFCNHGELKVIDSRNAPEANAIKRRRECLNC. Residues 48-138 form the ATP-cone domain; the sequence is LQVLKRDGRY…VYRRFKDVGE (91 aa).

It belongs to the NrdR family. Requires Zn(2+) as cofactor.

Its function is as follows. Negatively regulates transcription of bacterial ribonucleotide reductase nrd genes and operons by binding to NrdR-boxes. In Chlamydia abortus (strain DSM 27085 / S26/3) (Chlamydophila abortus), this protein is Transcriptional repressor NrdR.